We begin with the raw amino-acid sequence, 86 residues long: Small ribosomal subunit protein bS20 (86 aa).

This sequence belongs to the bacterial ribosomal protein bS20 family.

Binds directly to 16S ribosomal RNA. The sequence is that of Small ribosomal subunit protein bS20 from Exiguobacterium sibiricum (strain DSM 17290 / CCUG 55495 / CIP 109462 / JCM 13490 / 255-15).